The chain runs to 146 residues: Probable transporter XF_0765 (146 aa).

Transmembrane regions (helical) follow at residues 9-29 (FTVALAAGLLFGFGLALSEMI), 46-66 (NPSLLFVLGSALAVAFPGMAL), 91-111 (IVFGSAIFGTGWGLTGLCPGP), and 116-136 (LSTGLGPVLLFVAAMAAGMII).

This sequence belongs to the TsuA/YedE (TC 9.B.102) family.

The protein resides in the cell inner membrane. This chain is Probable transporter XF_0765, found in Xylella fastidiosa (strain 9a5c).